The sequence spans 103 residues: uncharacterized protein (103 aa).

This is an uncharacterized protein from Sulfolobus islandicus filamentous virus (isolate Iceland/Hveragerdi) (SIFV).